A 958-amino-acid polypeptide reads, in one-letter code: Glycine dehydrogenase (decarboxylating) (958 aa).

Residue K708 is modified to N6-(pyridoxal phosphate)lysine.

The protein belongs to the GcvP family. The glycine cleavage system is composed of four proteins: P, T, L and H. Pyridoxal 5'-phosphate is required as a cofactor.

It catalyses the reaction N(6)-[(R)-lipoyl]-L-lysyl-[glycine-cleavage complex H protein] + glycine + H(+) = N(6)-[(R)-S(8)-aminomethyldihydrolipoyl]-L-lysyl-[glycine-cleavage complex H protein] + CO2. The glycine cleavage system catalyzes the degradation of glycine. The P protein binds the alpha-amino group of glycine through its pyridoxal phosphate cofactor; CO(2) is released and the remaining methylamine moiety is then transferred to the lipoamide cofactor of the H protein. The sequence is that of Glycine dehydrogenase (decarboxylating) from Photorhabdus laumondii subsp. laumondii (strain DSM 15139 / CIP 105565 / TT01) (Photorhabdus luminescens subsp. laumondii).